The following is a 325-amino-acid chain: Forkhead box protein B1 (325 aa).

The segment at residues Gln-12–Leu-103 is a DNA-binding region (fork-head). The segment covering Leu-284 to Ser-309 has biased composition (low complexity). The tract at residues Leu-284 to His-325 is disordered.

In terms of tissue distribution, expressed widespread in the early developing ventricular zone of the neural tube and later restricted to areas of the spinal cord, hindbrain, thalamus and hypothalamus. Expressed in epithelial cells of developing and adult mammary glands.

The protein localises to the nucleus. Functionally, transcription factor expressed by neural progenitor cells in specific regions of the embryonic neuroepithelium. Essential for the mammillary nuclei maintenance. Negatively regulates the proliferation of oligodendrocyte progenitors and promotes oligodendrocyte maturation. Also expressed in mammary glands, plays a role in lactation, controls development of mammary glands and the inferior colliculi of the midbrain in the central nervous system that regulates the milk-ejection reflex. The chain is Forkhead box protein B1 (Foxb1) from Mus musculus (Mouse).